The chain runs to 343 residues: Globoside alpha-1,3-N-acetylgalactosaminyltransferase 1 (343 aa).

The Cytoplasmic portion of the chain corresponds to M1–A6. The chain crosses the membrane as a helical; Signal-anchor for type II membrane protein span at residues L7 to W27. Residues K28–N343 are Lumenal-facing. N104 carries an N-linked (GlcNAc...) asparagine glycan. Substrate is bound by residues F112–Y117, D202–D204, and H224–Y227. Positions 202 and 204 each coordinate Mn(2+). E294 functions as the Nucleophile in the catalytic mechanism.

Belongs to the glycosyltransferase 6 family. It depends on Mn(2+) as a cofactor.

It localises to the golgi apparatus membrane. Its pathway is protein modification; protein glycosylation. Functionally, may catalyze the formation of some glycolipid via the addition of N-acetylgalactosamine (GalNAc) in alpha-1,3-linkage to some substrate. Glycolipids probably serve for adherence of some pathogens. The protein is Globoside alpha-1,3-N-acetylgalactosaminyltransferase 1 of Gallus gallus (Chicken).